A 65-amino-acid polypeptide reads, in one-letter code: uncharacterized protein (65 aa).

A run of 2 helical transmembrane segments spans residues Ala4 to Leu24 and Leu39 to Phe59.

It is found in the membrane. This is an uncharacterized protein from Streptococcus pneumoniae serotype 2 (strain D39 / NCTC 7466).